A 324-amino-acid polypeptide reads, in one-letter code: NAD(P)H-dependent D-xylose reductase XYR1 (324 aa).

Y50 functions as the Proton donor in the catalytic mechanism. Residue H112 coordinates substrate. NAD(+) is bound by residues 168 to 169 (SN), 217 to 226 (SSFGPASFKE), and 273 to 283 (KSSREKTMKSN).

The protein belongs to the aldo/keto reductase family.

The enzyme catalyses xylitol + NAD(+) = D-xylose + NADH + H(+). The catalysed reaction is xylitol + NADP(+) = D-xylose + NADPH + H(+). The protein operates within carbohydrate metabolism; D-xylose degradation. Its function is as follows. Catalyzes the initial reaction in the xylose utilization pathway by reducing D-xylose into xylitol. Xylose is a major component of hemicelluloses such as xylan. Most fungi utilize D-xylose via three enzymatic reactions, xylose reductase (XR), xylitol dehydrogenase (XDH), and xylulokinase, to form xylulose 5-phosphate, which enters pentose phosphate pathway. This chain is NAD(P)H-dependent D-xylose reductase XYR1 (XYR1), found in Pyricularia oryzae (strain 70-15 / ATCC MYA-4617 / FGSC 8958) (Rice blast fungus).